We begin with the raw amino-acid sequence, 113 residues long: Mediator of RNA polymerase II transcription subunit 11 (113 aa).

This sequence belongs to the Mediator complex subunit 11 family. In terms of assembly, component of the Mediator complex.

The protein localises to the nucleus. In terms of biological role, component of the Mediator complex, a coactivator involved in the regulated transcription of nearly all RNA polymerase II-dependent genes. Mediator functions as a bridge to convey information from gene-specific regulatory proteins to the basal RNA polymerase II transcription machinery. Mediator is recruited to promoters by direct interactions with regulatory proteins and serves as a scaffold for the assembly of a functional pre-initiation complex with RNA polymerase II and the general transcription factors. This is Mediator of RNA polymerase II transcription subunit 11 (MED11) from Eremothecium gossypii (strain ATCC 10895 / CBS 109.51 / FGSC 9923 / NRRL Y-1056) (Yeast).